Consider the following 154-residue polypeptide: Leghemoglobin-1 (154 aa).

Residues 3–151 (VLTDVQVALV…LAIIIKKEMK (149 aa)) enclose the Globin domain. Position 46 (serine 46) interacts with heme b. At serine 46 the chain carries Phosphoserine. Histidine 64 contributes to the O2 binding site. The heme b site is built by lysine 67, histidine 98, and lysine 101. Residue tyrosine 139 is modified to Nitrated tyrosine.

The protein belongs to the plant globin family. As to quaternary structure, monomer. In terms of processing, nitrated in effective nodules and particularly in hypoxic conditions; this mechanism may play a protective role in the symbiosis by buffering toxic peroxynitrite NO(2)(-). Nitration level decrease during nodule senescence. Post-translationally, phosphorylation at Ser-46 disrupts the molecular environment of its porphyrin ring oxygen binding pocket, thus leading to a reduced oxygen consumption and to the delivery of oxygen O(2) to symbiosomes. Accumulates in developing root nodules and present in roots, especially in the upper part. Detected in leaves at low levels.

The protein localises to the cytoplasm. Its subcellular location is the cytosol. It localises to the nucleus. Leghemoglobin that reversibly binds oxygen O(2) through a pentacoordinated heme iron. In root nodules, facilitates the diffusion of oxygen to the bacteroids while preventing the bacterial nitrogenase from being inactivated by buffering dioxygen, nitric oxide and carbon monoxide, and promoting the formation of reactive oxygen species (ROS, e.g. H(2)O(2)). This role is essential for symbiotic nitrogen fixation (SNF). The protein is Leghemoglobin-1 of Lupinus luteus (European yellow lupine).